The following is an 83-amino-acid chain: Exodeoxyribonuclease 7 small subunit (83 aa).

The segment at Met1–Glu25 is disordered.

The protein belongs to the XseB family. Heterooligomer composed of large and small subunits.

The protein resides in the cytoplasm. The enzyme catalyses Exonucleolytic cleavage in either 5'- to 3'- or 3'- to 5'-direction to yield nucleoside 5'-phosphates.. Its function is as follows. Bidirectionally degrades single-stranded DNA into large acid-insoluble oligonucleotides, which are then degraded further into small acid-soluble oligonucleotides. This chain is Exodeoxyribonuclease 7 small subunit, found in Helicobacter pylori (strain P12).